Here is a 123-residue protein sequence, read N- to C-terminus: Fluoride-specific ion channel FluC (123 aa).

A run of 4 helical transmembrane segments spans residues 7-27 (LLLI…SGIL), 39-59 (LVNS…FFGF), 67-87 (IFLG…SYET), and 100-120 (FMNV…GFIL). Positions 75 and 78 each coordinate Na(+).

Belongs to the fluoride channel Fluc/FEX (TC 1.A.43) family.

The protein resides in the cell membrane. The enzyme catalyses fluoride(in) = fluoride(out). With respect to regulation, na(+) is not transported, but it plays an essential structural role and its presence is essential for fluoride channel function. Its function is as follows. Fluoride-specific ion channel. Important for reducing fluoride concentration in the cell, thus reducing its toxicity. This Pyrococcus abyssi (strain GE5 / Orsay) protein is Fluoride-specific ion channel FluC.